Reading from the N-terminus, the 159-residue chain is Secreted RxLR effector protein 50 (159 aa).

Positions Met1–Gly19 are cleaved as a signal peptide. A RxLR-dEER motif is present at residues Arg38–Arg54.

Belongs to the RxLR effector family.

The protein resides in the secreted. It localises to the host nucleus. Its subcellular location is the host cytoplasm. Secreted effector that completely suppresses the host cell death induced by cell death-inducing proteins. The chain is Secreted RxLR effector protein 50 from Plasmopara viticola (Downy mildew of grapevine).